A 369-amino-acid polypeptide reads, in one-letter code: Quinolinate synthase (369 aa).

Residues H47 and S64 each contribute to the iminosuccinate site. [4Fe-4S] cluster is bound at residue C111. Iminosuccinate is bound by residues 142–144 (YVN) and S163. C231 is a [4Fe-4S] cluster binding site. Iminosuccinate is bound by residues 257–259 (HPE) and T274. C321 serves as a coordination point for [4Fe-4S] cluster.

Belongs to the quinolinate synthase family. Type 3 subfamily. Requires [4Fe-4S] cluster as cofactor.

The protein localises to the cytoplasm. The catalysed reaction is iminosuccinate + dihydroxyacetone phosphate = quinolinate + phosphate + 2 H2O + H(+). It participates in cofactor biosynthesis; NAD(+) biosynthesis; quinolinate from iminoaspartate: step 1/1. Functionally, catalyzes the condensation of iminoaspartate with dihydroxyacetone phosphate to form quinolinate. The polypeptide is Quinolinate synthase (Bacillus pumilus (strain SAFR-032)).